We begin with the raw amino-acid sequence, 146 residues long: 3-dehydroquinate dehydratase (146 aa).

The active-site Proton acceptor is the Y22. Substrate-binding residues include N74, H80, and D87. H100 (proton donor) is an active-site residue. Residues 101 to 102 and R111 each bind substrate; that span reads LS.

Belongs to the type-II 3-dehydroquinase family. In terms of assembly, homododecamer.

It carries out the reaction 3-dehydroquinate = 3-dehydroshikimate + H2O. It participates in metabolic intermediate biosynthesis; chorismate biosynthesis; chorismate from D-erythrose 4-phosphate and phosphoenolpyruvate: step 3/7. In terms of biological role, catalyzes a trans-dehydration via an enolate intermediate. The chain is 3-dehydroquinate dehydratase from Clostridium perfringens (strain SM101 / Type A).